Reading from the N-terminus, the 324-residue chain is Glyoxylate/hydroxypyruvate reductase B (324 aa).

Residues Arg237 and Glu266 contribute to the active site. His285 serves as the catalytic Proton donor.

It belongs to the D-isomer specific 2-hydroxyacid dehydrogenase family. GhrB subfamily. As to quaternary structure, homodimer.

Its subcellular location is the cytoplasm. It catalyses the reaction glycolate + NADP(+) = glyoxylate + NADPH + H(+). The catalysed reaction is (R)-glycerate + NAD(+) = 3-hydroxypyruvate + NADH + H(+). It carries out the reaction (R)-glycerate + NADP(+) = 3-hydroxypyruvate + NADPH + H(+). In terms of biological role, catalyzes the NADPH-dependent reduction of glyoxylate and hydroxypyruvate into glycolate and glycerate, respectively. In Shigella flexneri serotype 5b (strain 8401), this protein is Glyoxylate/hydroxypyruvate reductase B.